Reading from the N-terminus, the 346-residue chain is Histone PARylation factor 1 (346 aa).

Position 1 is an N-acetylmethionine (M1). Residues 1 to 10 (MVGGGAKRRL) are compositionally biased toward basic residues. The disordered stretch occupies residues 1 to 29 (MVGGGAKRRLRGEGPQCEKPVDMKKSKSC). The residue at position 19 (K19) is an N6-acetyllysine. The span at 19–29 (KPVDMKKSKSC) shows a compositional bias: basic and acidic residues. S97 is subject to ADP-ribosylserine. N6-acetyllysine occurs at positions 186 and 233. PolyADP-ribosyl aspartic acid is present on D235. Y238 carries the ADP-ribosyltyrosine modification. E240 carries the post-translational modification PolyADP-ribosyl glutamic acid. The interval 242 to 346 (PETDASLRRI…SQDDVDQLAA (105 aa)) is interaction with PARP1. E284 functions as the Proton donor in the catalytic mechanism.

It belongs to the HPF1 family. In terms of assembly, interacts with PARP1 (via the PARP catalytic domain). Interacts with PARP2 (via the PARP catalytic domain). Interacts with core nucleosomes in a PARP1- and PARP2-dependent manner.

The protein localises to the chromosome. It localises to the nucleus. Cofactor for serine ADP-ribosylation that confers serine specificity on PARP1 and PARP2 and plays a key role in DNA damage response. Initiates the repair of double-strand DNA breaks: recruited to DNA damage sites by PARP1 and PARP2 and switches the amino acid specificity of PARP1 and PARP2 from aspartate or glutamate to serine residues, licensing serine ADP-ribosylation of target proteins. Serine ADP-ribosylation of target proteins, such as histones, promotes decompaction of chromatin and the recruitment of repair factors leading to the reparation of DNA strand breaks. Serine ADP-ribosylation of proteins constitutes the primary form of ADP-ribosylation of proteins in response to DNA damage. HPF1 acts by completing the active site of PARP1 and PARP2: forms a composite active site composed of residues from HPF1 and PARP1 or PARP2. While HPF1 promotes the initiation of serine ADP-ribosylation, it restricts the polymerase activity of PARP1 and PARP2 in order to limit the length of poly-ADP-ribose chains. HPF1 also promotes tyrosine ADP-ribosylation, probably by conferring tyrosine specificity on PARP1. In Bos taurus (Bovine), this protein is Histone PARylation factor 1.